A 102-amino-acid polypeptide reads, in one-letter code: Small integral membrane protein 29 (102 aa).

Asn-3 carries an N-linked (GlcNAc...) asparagine glycan. Residues 21–41 (VLGPFFLITLVGVVVAVVMYV) traverse the membrane as a helical segment.

It is found in the membrane. This chain is Small integral membrane protein 29, found in Mus musculus (Mouse).